A 419-amino-acid chain; its full sequence is L-2-hydroxyglutarate dehydrogenase, mitochondrial (419 aa).

A mitochondrion-targeting transit peptide spans 1–51 (MVPALRYLVGACGRARGGFAGDFPGASGLASGRPRPLCGGSRSASTSSFDI). 2 positions are modified to N6-acetyllysine: Lys-104 and Lys-173.

Belongs to the L2HGDH family. FAD serves as cofactor.

It is found in the mitochondrion. The enzyme catalyses (S)-2-hydroxyglutarate + A = 2-oxoglutarate + AH2. The chain is L-2-hydroxyglutarate dehydrogenase, mitochondrial (L2HGDH) from Pongo abelii (Sumatran orangutan).